The chain runs to 109 residues: ATP-dependent Clp protease adapter protein ClpS (109 aa).

The interval Met-1–Glu-20 is disordered.

Belongs to the ClpS family. In terms of assembly, binds to the N-terminal domain of the chaperone ClpA.

Functionally, involved in the modulation of the specificity of the ClpAP-mediated ATP-dependent protein degradation. The polypeptide is ATP-dependent Clp protease adapter protein ClpS (Caulobacter vibrioides (strain NA1000 / CB15N) (Caulobacter crescentus)).